The sequence spans 84 residues: Small ribosomal subunit protein bS20 (84 aa).

Belongs to the bacterial ribosomal protein bS20 family.

In terms of biological role, binds directly to 16S ribosomal RNA. This Lactiplantibacillus plantarum (strain ATCC BAA-793 / NCIMB 8826 / WCFS1) (Lactobacillus plantarum) protein is Small ribosomal subunit protein bS20.